Consider the following 59-residue polypeptide: Protein B3 (59 aa).

In Homo sapiens (Human), this protein is Protein B3 (B3).